Consider the following 362-residue polypeptide: Serine/threonine-protein kinase ZRK4 (362 aa).

The tract at residues 1-23 (MNDQKMSCWRKKSKKKNSEANQR) is disordered. Residues 35 to 362 (LEDLIELCNG…KELKRIERWT (328 aa)) form the Protein kinase domain. ATP is bound by residues 41–49 (LCNGKSNPI) and K89. The active-site Proton acceptor is the D185.

It belongs to the protein kinase superfamily. Ser/Thr protein kinase family. ZRK subfamily.

It catalyses the reaction L-seryl-[protein] + ATP = O-phospho-L-seryl-[protein] + ADP + H(+). The catalysed reaction is L-threonyl-[protein] + ATP = O-phospho-L-threonyl-[protein] + ADP + H(+). This Arabidopsis thaliana (Mouse-ear cress) protein is Serine/threonine-protein kinase ZRK4.